We begin with the raw amino-acid sequence, 295 residues long: bZIP transcription factor RISBZ5 (295 aa).

Residues 16–26 (REEAGAGDRKP) show a composition bias toward basic and acidic residues. Residues 16–157 (REEAGAGDRK…ARRSRRRKQA (142 aa)) are disordered. Residues 109–119 (SDSDSDCDSLL) show a composition bias toward acidic residues. Basic and acidic residues predominate over residues 120–136 (EAERSPRLRGTKSTETK). In terms of domain architecture, bZIP spans 134–197 (ETKRIRRMVS…NTAVTDNRIL (64 aa)). Residues 136–155 (KRIRRMVSNRESARRSRRRK) form a basic motif region. The tract at residues 162–176 (LESQVEQLKGENSSL) is leucine-zipper.

In terms of assembly, homodimer.

It is found in the nucleus. In terms of biological role, probable transcription factor that binds to the DNA specific sequence 5'-TGAGTCA-3' found in seed storage protein gene promoters. May function as a negative regulator in cold and drought stress responses. This chain is bZIP transcription factor RISBZ5, found in Oryza sativa subsp. japonica (Rice).